Here is a 272-residue protein sequence, read N- to C-terminus: Hydroxyacylglutathione hydrolase (272 aa).

The Zn(2+) site is built by His62, His64, Asp66, His67, His126, Asp146, and His184.

Belongs to the metallo-beta-lactamase superfamily. Glyoxalase II family. As to quaternary structure, monomer. The cofactor is Zn(2+).

The catalysed reaction is an S-(2-hydroxyacyl)glutathione + H2O = a 2-hydroxy carboxylate + glutathione + H(+). It participates in secondary metabolite metabolism; methylglyoxal degradation; (R)-lactate from methylglyoxal: step 2/2. In terms of biological role, thiolesterase that catalyzes the hydrolysis of S-D-lactoyl-glutathione to form glutathione and D-lactic acid. In Saccharophagus degradans (strain 2-40 / ATCC 43961 / DSM 17024), this protein is Hydroxyacylglutathione hydrolase.